Reading from the N-terminus, the 303-residue chain is Glycine betaine/carnitine/choline-binding protein OpuCC (303 aa).

The N-terminal stretch at 1–20 (MTKIKWLGAFALVFVMLLGG) is a signal peptide. Residue Cys21 is the site of N-palmitoyl cysteine attachment. Cys21 is lipidated: S-diacylglycerol cysteine.

This sequence belongs to the OsmX family. As to quaternary structure, the complex is composed of two ATP-binding proteins (OpuCA), two transmembrane proteins (OpuCB and OpuCD) and a solute-binding protein (OpuCC).

The protein resides in the cell membrane. Functionally, member of a high affinity multicomponent binding-protein-dependent transport system for glycine betaine, carnitine, and choline. The sequence is that of Glycine betaine/carnitine/choline-binding protein OpuCC (opuCC) from Bacillus subtilis (strain 168).